Reading from the N-terminus, the 263-residue chain is Hemin import ATP-binding protein HmuV (263 aa).

Residues 2–242 (IEARDVSVDI…DLIEKVFDCR (241 aa)) enclose the ABC transporter domain. 34-41 (GPNGSGKT) is a binding site for ATP.

The protein belongs to the ABC transporter superfamily. Heme (hemin) importer (TC 3.A.1.14.5) family. In terms of assembly, the complex is composed of two ATP-binding proteins (HmuV), two transmembrane proteins (HmuU) and a solute-binding protein (HmuT).

Its subcellular location is the cell inner membrane. In terms of biological role, part of the ABC transporter complex HmuTUV involved in hemin import. Responsible for energy coupling to the transport system. The chain is Hemin import ATP-binding protein HmuV from Mesorhizobium japonicum (strain LMG 29417 / CECT 9101 / MAFF 303099) (Mesorhizobium loti (strain MAFF 303099)).